A 928-amino-acid polypeptide reads, in one-letter code: DNA ligase 4 (928 aa).

ATP is bound by residues Glu-302, Lys-304, Arg-309, Glu-362, Phe-409, Glu-469, Lys-474, Lys-492, and Lys-494. Residue Lys-304 is the N6-AMP-lysine intermediate of the active site. Position 362 (Glu-362) interacts with Mg(2+). Position 469 (Glu-469) interacts with Mg(2+). 2 consecutive BRCT domains span residues 673 to 769 and 821 to 927; these read VESD…PYFI and PWIY…DYKF.

The protein belongs to the ATP-dependent DNA ligase family. Requires Mg(2+) as cofactor.

The protein localises to the nucleus. It carries out the reaction ATP + (deoxyribonucleotide)n-3'-hydroxyl + 5'-phospho-(deoxyribonucleotide)m = (deoxyribonucleotide)n+m + AMP + diphosphate.. DNA ligase involved in DNA non-homologous end joining (NHEJ); required for double-strand break (DSB) repair. Not required for the repair of DSBs induced by ionizing radiation or UV light. Has an important role in morphogenesis, positively affecting the capacity to form hyphae. This Candida albicans (strain SC5314 / ATCC MYA-2876) (Yeast) protein is DNA ligase 4 (LIG4).